The chain runs to 154 residues: Crossover junction endodeoxyribonuclease RuvC (154 aa).

Catalysis depends on residues Asp7, Glu67, and Asp139. 3 residues coordinate Mg(2+): Asp7, Glu67, and Asp139.

The protein belongs to the RuvC family. Homodimer which binds Holliday junction (HJ) DNA. The HJ becomes 2-fold symmetrical on binding to RuvC with unstacked arms; it has a different conformation from HJ DNA in complex with RuvA. In the full resolvosome a probable DNA-RuvA(4)-RuvB(12)-RuvC(2) complex forms which resolves the HJ. It depends on Mg(2+) as a cofactor.

It localises to the cytoplasm. The catalysed reaction is Endonucleolytic cleavage at a junction such as a reciprocal single-stranded crossover between two homologous DNA duplexes (Holliday junction).. The RuvA-RuvB-RuvC complex processes Holliday junction (HJ) DNA during genetic recombination and DNA repair. Endonuclease that resolves HJ intermediates. Cleaves cruciform DNA by making single-stranded nicks across the HJ at symmetrical positions within the homologous arms, yielding a 5'-phosphate and a 3'-hydroxyl group; requires a central core of homology in the junction. The consensus cleavage sequence is 5'-(A/T)TT(C/G)-3'. Cleavage occurs on the 3'-side of the TT dinucleotide at the point of strand exchange. HJ branch migration catalyzed by RuvA-RuvB allows RuvC to scan DNA until it finds its consensus sequence, where it cleaves and resolves the cruciform DNA. The chain is Crossover junction endodeoxyribonuclease RuvC from Synechococcus sp. (strain WH7803).